Consider the following 485-residue polypeptide: Rop guanine nucleotide exchange factor 2 (485 aa).

Residues 1–36 (MENLPNHEENDDVGYHQSPGPIDPNDHSASETPVYS) form a disordered region. A PRONE domain is found at 107–485 (LAVQEISEPE…YVDKTMRGEE (379 aa)).

As to quaternary structure, interacts with ARC10/ROP11. As to expression, expressed in the vascular tissues of roots, leaves, sepals, petals and siliques.

Guanine-nucleotide exchange factor (GEF) that acts as an activator of Rop (Rho of plants) GTPases by promoting the exchange of GDP for GTP. This chain is Rop guanine nucleotide exchange factor 2 (ROPGEF2), found in Arabidopsis thaliana (Mouse-ear cress).